The following is a 391-amino-acid chain: Aminoacetone oxidase (391 aa).

FAD contacts are provided by Ala14, Glu33, Ile134, Glu362, Asn374, and Ile375.

It belongs to the BaiN/RdsA family. As to quaternary structure, monomer. FAD is required as a cofactor.

In terms of biological role, flavoprotein that probably catalyzes the condensation of two molecules of aminoacetone to yield 3,6-dimethyl-2,5-dihydropyrazine, which is subsequently oxidized to 2,5-dimethylpyrazine. It could be involved in a microbial defense mechanism related to aminoacetone catabolism through a pathway yielding dimethylpyrazine derivatives instead of methylglyoxal. It has also low aminoacetone oxidase activity, and can produce hydrogen peroxide from aminoacetone. In addition, it shows very low L-amino acid oxidase activity, and can produce hydrogen peroxide from peptone and from seven amino acids, L-aspartate, L-tryptophan, L-lysine, L-isoleucine, L-arginine, L-asparagine and L-glutamine. It cannot use L-malate, oxaloacetate or alpha-aminobutyrate. Plays a role in antioxidant defense. This is Aminoacetone oxidase from Streptococcus cristatus.